The sequence spans 938 residues: MHSPGAGCPALQPDTPGSQPQPMDLRVGQRPTVEPPPEPALLTLQHPQRLHRHLFLAGLHQQQRSAEPMRLSMDPPMPELQGGQQEQELRQLLNKDKSKRSAVASSVVKQKLAEVILKKQQAALERTVHPSSPSIPYRTLEPLDTEGAARSVLSSFLPPVPSLPTEPPEHFPLRKTVSEPNLKLRYKPKKSLERRKNPLLRKESAPPSLRRRPAETLGDSSPSSSSTPASGCSSPNDSEHGPNPALGSEADGDRRTHSTLGPRGPVLGNPHAPLFLHHGLEPEAGGTLPSRLQPILLLDPSVSHAPLWTVPGLGPLPFHFAQPLLTTERLSGSGLHRPLNRTRSEPLPPSATASPLLAPLQPRQDRLKPHVQLIKPAISPPQRPAKPSEKPRLRQIPSAEDLETDGGGVGPMANDGLEHRESGRGPPEGRGSISLQQHQQVPPWEQQHLAGRLSQGSPGDSVLIPLAQVGHRPLSRTQSSPAAPVSLLSPEPTCQTQVLNSSETPATGLVYDSVMLKHQCSCGDNSKHPEHAGRIQSIWSRLQERGLRSQCECLRGRKASLEELQSVHSERHVLLYGTNPLSRLKLDNGKLTGLLAQRTFVMLPCGGVGVDTDTIWNELHSSNAARWAAGSVTDLAFKVASRELKNGFAVVRPPGHHADHSTAMGFCFFNSVAIACRQLQQHGKASKILIVDWDVHHGNGTQQTFYQDPSVLYISLHRHDDGNFFPGSGAVDEVGTGSGEGFNVNVAWAGGLDPPMGDPEYLAAFRIVVMPIAREFAPDLVLVSAGFDAAEGHPAPLGGYHVSAKCFGYMTQQLMNLAGGAVVLALEGGHDLTAICDASEACVAALLGNKVDPLSEESWKQKPNLSAIRSLEAVVRVHRKYWGCMQRLASCPDSWLPRVPGADAEVEAVTALASLSVGILAEDRPSERLVEEEEPMNL.

Residues 1-40 (MHSPGAGCPALQPDTPGSQPQPMDLRVGQRPTVEPPPEPA) form a disordered region. The segment at 1–121 (MHSPGAGCPA…LAEVILKKQQ (121 aa)) is interaction with MEF2C. Transcription repression regions lie at residues 2–254 (HSPG…DGDR) and 241–533 (GPNP…EHAG). Residues 72-172 (SMDPPMPELQ…LPTEPPEHFP (101 aa)) are interaction with MEF2A. Serine 132 carries the post-translational modification Phosphoserine. 4 disordered regions span residues 155–280 (SFLP…HHGL), 331–361 (SGSGLHRPLNRTRSEPLPPSATASPLLAPLQ), 373–463 (LIKP…DSVL), and 472–491 (RPLSRTQSSPAAPVSLLSPE). Serine 178 carries the post-translational modification Phosphoserine; by MARK2, MARK3 and PKD/PRKD1. Residues 190–204 (KSLERRKNPLLRKES) show a composition bias toward basic and acidic residues. Position 204 is a phosphoserine; by PKD/PRKD2 (serine 204). A compositionally biased stretch (low complexity) spans 220 to 235 (SSPSSSSTPASGCSSP). Phosphoserine; by PKD/PRKD1 is present on serine 344. A phosphoserine mark is found at serine 350 and serine 398. Residues 350–361 (SATASPLLAPLQ) show a composition bias toward low complexity. 2 stretches are compositionally biased toward low complexity: residues 429–448 (GRGSISLQQHQQVPPWEQQH) and 479–491 (SSPAAPVSLLSPE). At serine 479 the chain carries Phosphoserine; by PKD/PRKD1. A Phosphoserine modification is found at serine 480. The histone deacetylase stretch occupies residues 505–852 (PATGLVYDSV…VAALLGNKVD (348 aa)). Cysteine 520, cysteine 522, and histidine 528 together coordinate Zn(2+). Serine 582 is subject to Phosphoserine. Cysteine 605 provides a ligand contact to Zn(2+). Histidine 657 is an active-site residue. Positions 864-938 (NLSAIRSLEA…LVEEEEPMNL (75 aa)) are interaction with SIN3A. The short motif at 904–938 (AEVEAVTALASLSVGILAEDRPSERLVEEEEPMNL) is the Nuclear export signal element.

It belongs to the histone deacetylase family. HD type 2 subfamily. Interacts with HDAC1, HDAC2, HDAC3, HDAC4, HDAC5, NCOR1, NCOR2, SIN3A, SIN3B, RBBP4, RBBP7, MTA1L1, SAP30 and MBD3. Interacts with KAT5 and EDNRA. Interacts with the 14-3-3 protein YWHAE, MEF2A, MEF2B and MEF2C. Interacts with ZMYND15. Interacts with KDM5B. Interacts with PML. Interacts with FOXP3. Interacts with RARA. May be phosphorylated by CaMK1. Phosphorylated by the PKC kinases PKN1 and PKN2, impairing nuclear import. Phosphorylation at Ser-178 by MARK2, MARK3 and PRKD1 promotes interaction with 14-3-3 proteins and export from the nucleus. Phosphorylation at Ser-178 is a prerequisite for phosphorylation at Ser-204. In terms of tissue distribution, highly expressed in heart and lung. Expressed at intermediate level in muscle.

Its subcellular location is the nucleus. It is found in the cytoplasm. The enzyme catalyses N(6)-acetyl-L-lysyl-[histone] + H2O = L-lysyl-[histone] + acetate. It carries out the reaction N(6)-acetyl-L-lysyl-[protein] + H2O = L-lysyl-[protein] + acetate. Its activity is regulated as follows. Its activity is inhibited by Trichostatin A (TSA), a known histone deacetylase inhibitor. In terms of biological role, responsible for the deacetylation of lysine residues on the N-terminal part of the core histones (H2A, H2B, H3 and H4). Histone deacetylation gives a tag for epigenetic repression and plays an important role in transcriptional regulation, cell cycle progression and developmental events. Histone deacetylases act via the formation of large multiprotein complexes. Involved in muscle maturation by repressing transcription of myocyte enhancer factors such as MEF2A, MEF2B and MEF2C. During muscle differentiation, it shuttles into the cytoplasm, allowing the expression of myocyte enhancer factors. Positively regulates the transcriptional repressor activity of FOXP3. Serves as a corepressor of RARA, causing its deacetylation and inhibition of RARE DNA element binding. In association with RARA, plays a role in the repression of microRNA-10a and thereby in the inflammatory response. Also acetylates non-histone proteins, such as ALKBH5. The protein is Histone deacetylase 7 (Hdac7) of Mus musculus (Mouse).